The chain runs to 2698 residues: Chromodomain-helicase-DNA-binding protein 6 (2698 aa).

Basic and acidic residues-rich tracts occupy residues 1–12, 100–115, and 122–171; these read MKMKIQKKEKQL, EPGE…DREP, and EPKE…KRSC. Positions 1 to 243 are disordered; the sequence is MKMKIQKKEK…KRRSGRQVKR (243 aa). A required for DNA-dependent ATPase activity region spans residues 1–746; that stretch reads MKMKIQKKEK…MMELRKCCNH (746 aa). A compositionally biased stretch (low complexity) spans 213–224; that stretch reads QSLPNPSLQSPE. 2 consecutive Chromo domains span residues 291–342 and 374–438; these read NIIE…KDPR and IEID…KPVE. The Helicase ATP-binding domain maps to 472–646; sequence LFNWYNRKNC…FSLLNFLEPS (175 aa). 485-492 lines the ATP pocket; the sequence is DEMGLGKT. A DEAH box motif is present at residues 597 to 600; that stretch reads DEAH. One can recognise a Helicase C-terminal domain in the interval 786–955; the sequence is LIDKLLPKLI…LSKMEVEDLL (170 aa). Residues 1318–1370 are disordered; the sequence is SLSAEQGVTDGTSDIPERGNIDKEDSAEDKVDGLQKQTASPSDGSDGIFGEKK. Polar residues predominate over residues 1320 to 1329; that stretch reads SAEQGVTDGT. Basic and acidic residues predominate over residues 1332 to 1350; that stretch reads IPERGNIDKEDSAEDKVDG. Residues 1435 to 1489 form the Myb-like domain; it reads RWTRREQADFYRTVSSFGVVYDQEKEAFDWTQFRAISRLDKKSDENLEHYFHSFV. Residues 1707–1730 show a composition bias toward polar residues; that stretch reads EPRSFQEAPSTNMQSRKKTVTVSA. The disordered stretch occupies residues 1707–1731; that stretch reads EPRSFQEAPSTNMQSRKKTVTVSAS. Ser-1852 bears the Phosphoserine mark. Disordered stretches follow at residues 1935–2046, 2111–2137, 2308–2337, 2359–2387, 2538–2587, and 2626–2698; these read GLGS…ASGI, LPTP…HSFS, TTLN…QAEK, PGFG…IGSL, ASLA…PTIT, and QGRH…DDTN. Basic and acidic residues-rich tracts occupy residues 1943 to 1955, 1975 to 1991, and 2004 to 2024; these read GEKP…DPYR, FKLK…ESSE, and SEPK…KDGA. Composition is skewed to low complexity over residues 2117-2127 and 2315-2336; these read SSSAGSRSSLS and PEGP…SQAE. A compositionally biased stretch (low complexity) spans 2538 to 2550; sequence ASLASTKSGASAT. Residues 2552 to 2573 show a composition bias toward basic and acidic residues; sequence KTTEDELSGRDVKADSLVEDKP. 2 stretches are compositionally biased toward polar residues: residues 2578–2587 and 2664–2675; these read FSDQSEPTIT and SDQNCTESSVTV. The segment covering 2677–2698 has biased composition (basic and acidic residues); it reads PEREHVAQAREEGLKDSNDDTN.

The protein belongs to the SNF2/RAD54 helicase family. Interacts with NFE2L2; involved in activation of the transcription. May interact with PPARA. Widely expressed.

It localises to the nucleus. It is found in the nucleoplasm. It carries out the reaction ATP + H2O = ADP + phosphate + H(+). ATP-dependent chromatin-remodeling factor. Regulates transcription by disrupting nucleosomes in a largely non-sliding manner which strongly increases the accessibility of chromatin. Activates transcription of specific genes in response to oxidative stress through interaction with NFE2L2. In Rattus norvegicus (Rat), this protein is Chromodomain-helicase-DNA-binding protein 6 (Chd6).